Consider the following 466-residue polypeptide: Asparagine--tRNA ligase (466 aa).

Belongs to the class-II aminoacyl-tRNA synthetase family. In terms of assembly, homodimer.

The protein localises to the cytoplasm. It catalyses the reaction tRNA(Asn) + L-asparagine + ATP = L-asparaginyl-tRNA(Asn) + AMP + diphosphate + H(+). The chain is Asparagine--tRNA ligase from Shigella dysenteriae serotype 1 (strain Sd197).